The primary structure comprises 285 residues: Dioxygenase andF (285 aa).

Residues histidine 128, aspartate 130, and histidine 205 each coordinate Fe cation.

It belongs to the PhyH family. Homodimer. Requires Fe cation as cofactor.

It functions in the pathway secondary metabolite biosynthesis; terpenoid biosynthesis. Dioxygenase; part of the gene cluster that mediates the biosynthesis of anditomin, a fungal meroterpenoid. The first step of the pathway is the synthesis of 3,5-dimethylorsellinic acid (DMOA) by the polyketide synthase andM. DMOA is then converted to the phthalide compound 5,7-dihydroxy-4,6-dimethylphthalide (DHDMP) by the cytochrome P450 monooxygenase andK, which is further prenylated by the prenyltransferase andD to yield farnesyl-DHDMP. Further epoxidation by the FAD-dependent monooxygenase andE leads to epoxyfarnesyl-DHDMP. The next step involves the terpene cyclase andB that converts epoxyfarnesyl-DHDMP into preandiloid A through opening of the epoxide ring followed by the cyclization of the farnesyl moiety. Preandiloid A is in turn oxidized at the C-3 hydroxyl group to yield preandiloid B by the dehydrogenase andC. The dioxygenase andA is solely responsible for the dehydrogenation of preandiloid B leading to the enone preandiloid C, as well as for the intriguing structural rearrangement to generate the bicyclo[2.2.2]octane core, transforming preandiloid C into andiconin. FAD-binding monooxygenase andJ then produces andilesin D which is reduced by dehydrogenase andI to yield andilesin A. Action of acetyltransferase andG followed by a spontaneous acetate elimination leads then to andilesin B, which is in turn substrate of the short chain dehydrogenase andH to yield andilesin C. Finally, the dioxygenase andF catalyzes the transformation of andilesin C to anditomin. In Emericella variicolor (Aspergillus stellatus), this protein is Dioxygenase andF.